The primary structure comprises 1073 residues: Carbamoyl phosphate synthase large chain (1073 aa).

The carboxyphosphate synthetic domain stretch occupies residues 2 to 403; that stretch reads PKRTDIKSIL…SVQKALRGLE (402 aa). Arg-129, Arg-169, Gly-175, Gly-176, Glu-208, Leu-210, Glu-215, Gly-241, Val-242, His-243, Gln-285, and Glu-299 together coordinate ATP. Positions 133–328 constitute an ATP-grasp 1 domain; sequence DKAMKDIGLA…IAKIAAKLAV (196 aa). 3 residues coordinate Mg(2+): Gln-285, Glu-299, and Asn-301. Residues Gln-285, Glu-299, and Asn-301 each coordinate Mn(2+). An oligomerization domain region spans residues 404-553; that stretch reads VGATGFDPKL…YSTYEEECEA (150 aa). Positions 554-935 are carbamoyl phosphate synthetic domain; sequence NPSSREKIMI…AFAKAQLGAS (382 aa). The ATP-grasp 2 domain maps to 678–869; that stretch reads QQMVQRLNLR…LAKVAARVMA (192 aa). Residues Arg-714, His-753, Leu-755, Glu-760, Gly-785, Val-786, His-787, Ser-788, Gln-828, and Glu-840 each coordinate ATP. Residues Gln-828, Glu-840, and Asn-842 each coordinate Mg(2+). The Mn(2+) site is built by Gln-828, Glu-840, and Asn-842. Positions 936–1073 constitute an MGS-like domain; sequence EILPTAGCAF…LQDLHAGIKA (138 aa). The tract at residues 936–1073 is allosteric domain; that stretch reads EILPTAGCAF…LQDLHAGIKA (138 aa).

It belongs to the CarB family. As to quaternary structure, composed of two chains; the small (or glutamine) chain promotes the hydrolysis of glutamine to ammonia, which is used by the large (or ammonia) chain to synthesize carbamoyl phosphate. Tetramer of heterodimers (alpha,beta)4. Mg(2+) is required as a cofactor. Requires Mn(2+) as cofactor.

It carries out the reaction hydrogencarbonate + L-glutamine + 2 ATP + H2O = carbamoyl phosphate + L-glutamate + 2 ADP + phosphate + 2 H(+). It catalyses the reaction hydrogencarbonate + NH4(+) + 2 ATP = carbamoyl phosphate + 2 ADP + phosphate + 2 H(+). It participates in amino-acid biosynthesis; L-arginine biosynthesis; carbamoyl phosphate from bicarbonate: step 1/1. It functions in the pathway pyrimidine metabolism; UMP biosynthesis via de novo pathway; (S)-dihydroorotate from bicarbonate: step 1/3. Functionally, large subunit of the glutamine-dependent carbamoyl phosphate synthetase (CPSase). CPSase catalyzes the formation of carbamoyl phosphate from the ammonia moiety of glutamine, carbonate, and phosphate donated by ATP, constituting the first step of 2 biosynthetic pathways, one leading to arginine and/or urea and the other to pyrimidine nucleotides. The large subunit (synthetase) binds the substrates ammonia (free or transferred from glutamine from the small subunit), hydrogencarbonate and ATP and carries out an ATP-coupled ligase reaction, activating hydrogencarbonate by forming carboxy phosphate which reacts with ammonia to form carbamoyl phosphate. The chain is Carbamoyl phosphate synthase large chain from Pseudomonas aeruginosa (strain ATCC 15692 / DSM 22644 / CIP 104116 / JCM 14847 / LMG 12228 / 1C / PRS 101 / PAO1).